The sequence spans 178 residues: Large ribosomal subunit protein uL6 (178 aa).

The protein belongs to the universal ribosomal protein uL6 family. As to quaternary structure, part of the 50S ribosomal subunit.

This protein binds to the 23S rRNA, and is important in its secondary structure. It is located near the subunit interface in the base of the L7/L12 stalk, and near the tRNA binding site of the peptidyltransferase center. The polypeptide is Large ribosomal subunit protein uL6 (Coxiella burnetii (strain CbuG_Q212) (Coxiella burnetii (strain Q212))).